The chain runs to 314 residues: uncharacterized protein (314 aa).

Residues 1–70 (MAGNSQRRGA…QGRHKKTDDT (70 aa)) form a disordered region. Residues 44 to 65 (RPHHPAGKRAAKAARQAQGRHK) show a composition bias toward basic residues. S-adenosyl-L-methionine is bound by residues Gly265, Ile285, and Leu294.

The protein belongs to the class IV-like SAM-binding methyltransferase superfamily. RNA methyltransferase TrmH family.

This is an uncharacterized protein from Mycolicibacterium gilvum (strain PYR-GCK) (Mycobacterium gilvum (strain PYR-GCK)).